A 79-amino-acid polypeptide reads, in one-letter code: Putative antitoxin VapB12 (79 aa).

The protein belongs to the UPF0330 family.

In terms of biological role, possibly the antitoxin component of a type II toxin-antitoxin (TA) system. Its cognate toxin is VapC12 (Potential). This Sulfurisphaera tokodaii (strain DSM 16993 / JCM 10545 / NBRC 100140 / 7) (Sulfolobus tokodaii) protein is Putative antitoxin VapB12 (vapB12).